Reading from the N-terminus, the 266-residue chain is Probable carboxylesterase Os04g0669500 (266 aa).

Catalysis depends on charge relay system residues Ser154, Asp208, and His240.

It belongs to the AB hydrolase superfamily. AB hydrolase 2 family.

Functionally, possesses carboxylesterase activity in vitro. The protein is Probable carboxylesterase Os04g0669500 of Oryza sativa subsp. japonica (Rice).